The sequence spans 475 residues: MMRRVTSSLPSALKLGRSLGPNVRFSGGAAAVEASPAIPPNSSSGKTLVRNMKPRELMQELDNYIIGQTEAKKAVAVALRNRWRRHQVDAAIREEISPKNILMIGPTGVGKTEIARRLAKLVDAPFIKVEATKFTEVGFHGRDVESIIEDLYKASLTQTKQNIMRRHEETARQKAENRILKALAGVSDGFREHLRSGALDDIEVIVELQEKKEKPKNSGTNEGVFISLEIPSSIGGQRPQTVKKVMKIKDAIPAVLQEELDKIVDTEDVSAEALRACEEDGIVVIDEIDKIVTASGGYKGHQASAEGVQQDLLPLVEGTTVSTKGNVQIKTDKILFICSGAFHSVKPSDMLAELQGRLPIRVELKPLTKEDFHRIITEPRYNLIKQHVMMMKTEGVDLVFTDDALWEIASIAAHINSTVQNIGARRLITITEKVVEEVSFDGPDRKGETFVIDAAYVRNSVESMMKKVDIKKFIL.

A mitochondrion-targeting transit peptide spans 1–27; that stretch reads MMRRVTSSLPSALKLGRSLGPNVRFSG. Residues isoleucine 66, 108 to 113, aspartate 286, glutamate 353, and arginine 425 contribute to the ATP site; that span reads GVGKTE.

This sequence belongs to the ClpX chaperone family. HslU subfamily. As to quaternary structure, a double ring-shaped homohexamer of HslV is capped on each side by a ring-shaped HslU homohexamer. The assembly of the HslU/HslV complex (HslVU) is dependent on binding of ATP.

It is found in the mitochondrion matrix. The protein resides in the kinetoplast. Its function is as follows. ATPase subunit of a proteasome-like degradation complex; this subunit has chaperone activity. The binding of ATP and its subsequent hydrolysis by HslU are essential for unfolding of protein substrates subsequently hydrolyzed by HslV. HslU recognizes the N-terminal part of its protein substrates and unfolds these before they are guided to HslV for hydrolysis. The HslVU protease complex functions in mitochondrial DNA replication by regulating DNA helicase PIF2 protein levels. The sequence is that of ATP-dependent protease ATPase subunit HslU1 (HslU1) from Trypanosoma brucei brucei (strain 927/4 GUTat10.1).